Here is a 503-residue protein sequence, read N- to C-terminus: Probable apyrase 4 (503 aa).

Residues 1 to 14 are compositionally biased toward low complexity; that stretch reads MQRSNARSRSNINS. A disordered region spans residues 1-39; the sequence is MQRSNARSRSNINSDMVDPPEVQTSPGNHRSSPSTAAKP. The Cytoplasmic portion of the chain corresponds to 1-45; sequence MQRSNARSRSNINSDMVDPPEVQTSPGNHRSSPSTAAKPKSKRTK. The chain crosses the membrane as a helical; Signal-anchor for type II membrane protein span at residues 46–66; sequence SIIFVIVACVTIALGLLFIGY. The Extracellular segment spans residues 67-503; the sequence is SILRSGRNRR…DLSNVAKYKI (437 aa). Residue 83-93 coordinates ATP; that stretch reads VIIDGGSSGTR. The Proton acceptor role is filled by Glu206. Residue 230–240 participates in ATP binding; that stretch reads GIVELGGASAQ. N-linked (GlcNAc...) asparagine glycans are attached at residues Asn261, Asn293, and Asn338.

This sequence belongs to the GDA1/CD39 NTPase family. It depends on Ca(2+) as a cofactor. Expressed both in the primary root and lateral root but not in the rosette leaves.

Its subcellular location is the membrane. The catalysed reaction is a ribonucleoside 5'-triphosphate + 2 H2O = a ribonucleoside 5'-phosphate + 2 phosphate + 2 H(+). Its function is as follows. Catalyzes the hydrolysis of phosphoanhydride bonds of nucleoside tri- and di-phosphates. The sequence is that of Probable apyrase 4 (APY4) from Arabidopsis thaliana (Mouse-ear cress).